The chain runs to 368 residues: 4-hydroxy-3-methylbut-2-en-1-yl diphosphate synthase (flavodoxin) (368 aa).

The [4Fe-4S] cluster site is built by Cys-271, Cys-274, Cys-306, and Glu-313.

Belongs to the IspG family. [4Fe-4S] cluster is required as a cofactor.

The catalysed reaction is (2E)-4-hydroxy-3-methylbut-2-enyl diphosphate + oxidized [flavodoxin] + H2O + 2 H(+) = 2-C-methyl-D-erythritol 2,4-cyclic diphosphate + reduced [flavodoxin]. Its pathway is isoprenoid biosynthesis; isopentenyl diphosphate biosynthesis via DXP pathway; isopentenyl diphosphate from 1-deoxy-D-xylulose 5-phosphate: step 5/6. Functionally, converts 2C-methyl-D-erythritol 2,4-cyclodiphosphate (ME-2,4cPP) into 1-hydroxy-2-methyl-2-(E)-butenyl 4-diphosphate. This is 4-hydroxy-3-methylbut-2-en-1-yl diphosphate synthase (flavodoxin) from Mannheimia succiniciproducens (strain KCTC 0769BP / MBEL55E).